The following is a 556-amino-acid chain: 2-succinyl-5-enolpyruvyl-6-hydroxy-3-cyclohexene-1-carboxylate synthase (556 aa).

This sequence belongs to the TPP enzyme family. MenD subfamily. In terms of assembly, homodimer. It depends on Mg(2+) as a cofactor. Requires Mn(2+) as cofactor. Thiamine diphosphate serves as cofactor.

It carries out the reaction isochorismate + 2-oxoglutarate + H(+) = 5-enolpyruvoyl-6-hydroxy-2-succinyl-cyclohex-3-ene-1-carboxylate + CO2. The protein operates within quinol/quinone metabolism; 1,4-dihydroxy-2-naphthoate biosynthesis; 1,4-dihydroxy-2-naphthoate from chorismate: step 2/7. Its pathway is quinol/quinone metabolism; menaquinone biosynthesis. Catalyzes the thiamine diphosphate-dependent decarboxylation of 2-oxoglutarate and the subsequent addition of the resulting succinic semialdehyde-thiamine pyrophosphate anion to isochorismate to yield 2-succinyl-5-enolpyruvyl-6-hydroxy-3-cyclohexene-1-carboxylate (SEPHCHC). The sequence is that of 2-succinyl-5-enolpyruvyl-6-hydroxy-3-cyclohexene-1-carboxylate synthase from Salmonella paratyphi A (strain AKU_12601).